Here is a 165-residue protein sequence, read N- to C-terminus: 2-C-methyl-D-erythritol 2,4-cyclodiphosphate synthase (165 aa).

Residues aspartate 11 and histidine 13 each contribute to the a divalent metal cation site. 4-CDP-2-C-methyl-D-erythritol 2-phosphate-binding positions include 11–13 (DVH) and 40–41 (HS). Histidine 48 is a binding site for a divalent metal cation. 4-CDP-2-C-methyl-D-erythritol 2-phosphate is bound by residues 62–64 (DIG), 67–71 (FPDTD), 137–140 (TTSE), phenylalanine 144, and arginine 147.

It belongs to the IspF family. As to quaternary structure, homotrimer. A divalent metal cation serves as cofactor.

It carries out the reaction 4-CDP-2-C-methyl-D-erythritol 2-phosphate = 2-C-methyl-D-erythritol 2,4-cyclic diphosphate + CMP. It functions in the pathway isoprenoid biosynthesis; isopentenyl diphosphate biosynthesis via DXP pathway; isopentenyl diphosphate from 1-deoxy-D-xylulose 5-phosphate: step 4/6. Involved in the biosynthesis of isopentenyl diphosphate (IPP) and dimethylallyl diphosphate (DMAPP), two major building blocks of isoprenoid compounds. Catalyzes the conversion of 4-diphosphocytidyl-2-C-methyl-D-erythritol 2-phosphate (CDP-ME2P) to 2-C-methyl-D-erythritol 2,4-cyclodiphosphate (ME-CPP) with a corresponding release of cytidine 5-monophosphate (CMP). This chain is 2-C-methyl-D-erythritol 2,4-cyclodiphosphate synthase, found in Rubrobacter xylanophilus (strain DSM 9941 / JCM 11954 / NBRC 16129 / PRD-1).